The sequence spans 506 residues: uncharacterized protein (506 aa).

Belongs to the Mg-chelatase subunits D/I family. ComM subfamily.

This is an uncharacterized protein from Escherichia coli (strain K12).